Reading from the N-terminus, the 234-residue chain is Lipoprotein-releasing system ATP-binding protein LolD (234 aa).

Residues 7–233 (LQCINLCKRY…LQHHLTLVGA (227 aa)) form the ABC transporter domain. 43–50 (GSSGSGKS) is a binding site for ATP.

The protein belongs to the ABC transporter superfamily. Lipoprotein translocase (TC 3.A.1.125) family. As to quaternary structure, the complex is composed of two ATP-binding proteins (LolD) and two transmembrane proteins (LolC and LolE).

It is found in the cell inner membrane. Functionally, part of the ABC transporter complex LolCDE involved in the translocation of mature outer membrane-directed lipoproteins, from the inner membrane to the periplasmic chaperone, LolA. Responsible for the formation of the LolA-lipoprotein complex in an ATP-dependent manner. In Yersinia pestis bv. Antiqua (strain Antiqua), this protein is Lipoprotein-releasing system ATP-binding protein LolD.